A 770-amino-acid chain; its full sequence is Pheromone-regulated membrane protein 10 (770 aa).

2 disordered regions span residues 1 to 125 and 139 to 169; these read MDGR…DGDD and NQGGLVPGLAPIPSENENGKDDIEKNNRNEE. 2 stretches are compositionally biased toward polar residues: residues 49–63 and 78–93; these read SGKSISDLGISNNDN and DLSSRSTETSDNSKGT. Over residues 155-169 the composition is skewed to basic and acidic residues; that stretch reads ENGKDDIEKNNRNEE. Helical transmembrane passes span 453–473, 475–495, 505–525, 529–549, 568–588, 604–624, 629–649, 659–679, 681–701, and 740–760; these read WMCVLLYAFCSAMVTPYAFGG, WVNLAISFFMGLCVGSLQFIL, VFEISASIVVSFCGRAFGSIP, ICFGAVTQGSLALILPGYIIL, FYAIIYSLFLGFGITLGSALF, LISPWFRFLFVPAFTISISLL, ISQLPVMVFISCTGYVVTYWA, FTAALAAFVIGVLGNLYSRIW, GLAVSAMLPAIFVQVPSGIAS, and IQVCVGISVGLFASSLFVYPF.

This sequence belongs to the ThrE exporter (TC 2.A.79) family.

The protein resides in the membrane. This is Pheromone-regulated membrane protein 10 (PRM10) from Saccharomyces cerevisiae (strain YJM789) (Baker's yeast).